Reading from the N-terminus, the 78-residue chain is Translational regulator CsrA (78 aa).

It belongs to the CsrA/RsmA family. Homodimer; the beta-strands of each monomer intercalate to form a hydrophobic core, while the alpha-helices form wings that extend away from the core.

The protein localises to the cytoplasm. In terms of biological role, a translational regulator that binds mRNA to regulate translation initiation and/or mRNA stability. Usually binds in the 5'-UTR at or near the Shine-Dalgarno sequence preventing ribosome-binding, thus repressing translation. Its main target seems to be the major flagellin gene, while its function is anatagonized by FliW. In Caldicellulosiruptor bescii (strain ATCC BAA-1888 / DSM 6725 / KCTC 15123 / Z-1320) (Anaerocellum thermophilum), this protein is Translational regulator CsrA.